A 525-amino-acid polypeptide reads, in one-letter code: GMP synthase [glutamine-hydrolyzing] (525 aa).

A Glutamine amidotransferase type-1 domain is found at 8-207 (KILILDFGSQ…ALDICQCEAN (200 aa)). Cys85 serves as the catalytic Nucleophile. Active-site residues include His181 and Glu183. The GMPS ATP-PPase domain occupies 208-400 (WKPSSIIEDA…LGLPYNMLYR (193 aa)). 235–241 (SGGVDSS) lines the ATP pocket.

As to quaternary structure, homodimer.

It catalyses the reaction XMP + L-glutamine + ATP + H2O = GMP + L-glutamate + AMP + diphosphate + 2 H(+). The protein operates within purine metabolism; GMP biosynthesis; GMP from XMP (L-Gln route): step 1/1. Catalyzes the synthesis of GMP from XMP. The sequence is that of GMP synthase [glutamine-hydrolyzing] from Shewanella loihica (strain ATCC BAA-1088 / PV-4).